Reading from the N-terminus, the 109-residue chain is Small ribosomal subunit protein bS6 (109 aa).

This sequence belongs to the bacterial ribosomal protein bS6 family.

Binds together with bS18 to 16S ribosomal RNA. This chain is Small ribosomal subunit protein bS6, found in Dehalococcoides mccartyi (strain CBDB1).